The sequence spans 591 residues: 2-succinyl-5-enolpyruvyl-6-hydroxy-3-cyclohexene-1-carboxylate synthase (591 aa).

This sequence belongs to the TPP enzyme family. MenD subfamily. Homodimer. The cofactor is Mg(2+). Mn(2+) serves as cofactor. It depends on thiamine diphosphate as a cofactor.

It catalyses the reaction isochorismate + 2-oxoglutarate + H(+) = 5-enolpyruvoyl-6-hydroxy-2-succinyl-cyclohex-3-ene-1-carboxylate + CO2. The protein operates within quinol/quinone metabolism; 1,4-dihydroxy-2-naphthoate biosynthesis; 1,4-dihydroxy-2-naphthoate from chorismate: step 2/7. Its pathway is quinol/quinone metabolism; menaquinone biosynthesis. In terms of biological role, catalyzes the thiamine diphosphate-dependent decarboxylation of 2-oxoglutarate and the subsequent addition of the resulting succinic semialdehyde-thiamine pyrophosphate anion to isochorismate to yield 2-succinyl-5-enolpyruvyl-6-hydroxy-3-cyclohexene-1-carboxylate (SEPHCHC). This is 2-succinyl-5-enolpyruvyl-6-hydroxy-3-cyclohexene-1-carboxylate synthase from Salinibacter ruber (strain DSM 13855 / M31).